A 1220-amino-acid polypeptide reads, in one-letter code: Pesticidal crystal protein Cry5Ac (1220 aa).

The tract at residues 1194–1220 (PLPTDDQNSEGNTAFSTNSDTSMNNNQ) is disordered. A compositionally biased stretch (polar residues) spans 1198–1220 (DDQNSEGNTAFSTNSDTSMNNNQ).

Belongs to the delta endotoxin family.

Functionally, promotes colloidosmotic lysis by binding to the midgut epithelial cells of hymenopteran species. This Bacillus thuringiensis protein is Pesticidal crystal protein Cry5Ac (cry5Ac).